Reading from the N-terminus, the 574-residue chain is Cytochrome P450 306a1 (574 aa).

A compositionally biased stretch (basic and acidic residues) spans 303-314 (EKEQLRQSKEAD). The tract at residues 303-333 (EKEQLRQSKEADPSQEQSEADEDDEESDEED) is disordered. Acidic residues predominate over residues 320 to 333 (SEADEDDEESDEED). A heme-binding site is contributed by cysteine 505.

Belongs to the cytochrome P450 family. Heme serves as cofactor. First seen at the early (syncytial) blastoderm stage 4. During cellularization of the blastoderm (stage 5), stripes of expression appear and remain through to stage 10. Expression becomes undetectable during germ band retraction (stages 11-14). By stage 15, some expression resumes in the primordium of the ring gland, so that by stage 17 strong expression is seen, but only in the ring gland. This specific localization continues throughout the larval instars (at protein level). Expressed in the prothoracic gland cells of the larval ring gland (RG). Levels decline just after the molt to the third instar then increase later during the wandering stage. Low levels of expression are seen in the larval brain and fat body. In the adult, majority of expression is restricted to the ovaries, with low levels in the head and carcass of both sexes.

It localises to the endoplasmic reticulum membrane. The protein resides in the microsome membrane. The catalysed reaction is 2,22,25-trideoxyecdysone + 2 reduced [adrenodoxin] + O2 + 2 H(+) = 2,22-dideoxyecdysone + 2 oxidized [adrenodoxin] + H2O. It participates in steroid biosynthesis; ecdysteroid biosynthesis. Its function is as follows. Involved in the metabolism of insect hormones; responsible for ecdysteroid C25-hydroxylase activity. May be involved in the breakdown of synthetic insecticides. This is Cytochrome P450 306a1 from Drosophila melanogaster (Fruit fly).